The chain runs to 459 residues: Exodeoxyribonuclease 7 large subunit (459 aa).

The protein belongs to the XseA family. In terms of assembly, heterooligomer composed of large and small subunits.

It is found in the cytoplasm. The enzyme catalyses Exonucleolytic cleavage in either 5'- to 3'- or 3'- to 5'-direction to yield nucleoside 5'-phosphates.. In terms of biological role, bidirectionally degrades single-stranded DNA into large acid-insoluble oligonucleotides, which are then degraded further into small acid-soluble oligonucleotides. The sequence is that of Exodeoxyribonuclease 7 large subunit from Pseudomonas fluorescens (strain ATCC BAA-477 / NRRL B-23932 / Pf-5).